A 328-amino-acid chain; its full sequence is Interleukin-12 subunit beta (328 aa).

An N-terminal signal peptide occupies residues 1 to 22 (MCHQQLVISWFSLVFLASPLMA). Positions 29–106 (DVYVVELDWY…LSHSLLLLHK (78 aa)) constitute an Ig-like C2-type domain. The cysteines at positions 50 and 90 are disulfide-linked. N-linked (GlcNAc...) asparagine glycans are attached at residues Asn125, Asn135, Asn222, and Asn303. The Fibronectin type-III domain maps to 237–328 (PPKNLQLKPL…WSEWASVPCS (92 aa)).

The protein belongs to the IL-12B family. In terms of assembly, heterodimer with IL12A; disulfide-linked. The heterodimer is known as interleukin IL-12. Heterodimer with IL23A; disulfide-linked. The heterodimer is known as interleukin IL-23. Also secreted as a monomer. Interacts with NBR1; this interaction promotes IL-12 secretion.

Its subcellular location is the secreted. Cytokine that can act as a growth factor for activated T and NK cells, enhance the lytic activity of NK/lymphokine-activated killer cells, and stimulate the production of IFN-gamma by resting PBMC. Its function is as follows. Associates with IL23A to form the IL-23 interleukin, a heterodimeric cytokine which functions in innate and adaptive immunity. IL-23 may constitute with IL-17 an acute response to infection in peripheral tissues. IL-23 binds to a heterodimeric receptor complex composed of IL12RB1 and IL23R, activates the Jak-Stat signaling cascade, stimulates memory rather than naive T-cells and promotes production of pro-inflammatory cytokines. IL-23 induces autoimmune inflammation and thus may be responsible for autoimmune inflammatory diseases and may be important for tumorigenesis. The protein is Interleukin-12 subunit beta (IL12B) of Papio anubis (Olive baboon).